We begin with the raw amino-acid sequence, 1755 residues long: Transposon Ty1-OR Gag-Pol polyprotein (1755 aa).

Polar residues-rich tracts occupy residues 1–10 (MESQQLSNYP), 48–60 (TKANSQQTTTPAS), and 127–152 (QSQFPQYPSSVGTPLSTPSPESGNTF). Disordered regions lie at residues 1 to 93 (MESQ…MMTQ), 126 to 173 (PQSQ…RPPP), and 352 to 421 (GSRN…SKST). Residues 153–165 (TDSSSADSDMTST) show a composition bias toward low complexity. Residues 299-401 (NNGIHINNKV…NSKSKTARAH (103 aa)) form an RNA-binding region. Positions 402-418 (NVSTSNNSPSTDNDSIS) are enriched in low complexity. Residue S416 is modified to Phosphoserine. D461 (for protease activity; shared with dimeric partner) is an active-site residue. The integrase-type zinc finger-like stretch occupies residues 583–640 (NVHTSESTRKYPYPFIHRMLAHANAQTIRYSLKNNTITYFNESDVDWSSAIDYQCPDC). One can recognise an Integrase catalytic domain in the interval 660-835 (NSYEPFQYLH…AGLDISTLLP (176 aa)). The Mg(2+) site is built by D671 and D736. Disordered stretches follow at residues 956–1087 (SKAV…ETEK), 1092–1111 (RSPSIDASPPENNSSHNIVP), and 1130–1187 (DLPL…DNET). Residues 960-969 (SPTDSTPPST) show a composition bias toward low complexity. Residues 1005–1015 (STPQISNIEST) show a composition bias toward polar residues. A compositionally biased stretch (basic and acidic residues) spans 1038–1053 (ESSHASKSKDFRHSDS). 2 stretches are compositionally biased toward polar residues: residues 1054–1082 (YSENETNHTNVPISSTGGTNNKTVPQISD) and 1101–1111 (PENNSSHNIVP). A Bipartite nuclear localization signal motif is present at residues 1178–1212 (KKRSLEDNETEIKVSRDTWNTKNMRSLEPPRSKKR). Residues 1338 to 1476 (NNYYITQLDI…DILGLEIKYQ (139 aa)) form the Reverse transcriptase Ty1/copia-type domain. Mg(2+) is bound by residues D1346, D1427, D1428, D1610, E1652, and D1685. Residues 1610-1752 (DASYGNQPYY…IKTFKLLTNK (143 aa)) form the RNase H Ty1/copia-type domain.

In terms of assembly, the capsid protein forms a homotrimer, from which the VLPs are assembled. The protease is a homodimer, whose active site consists of two apposed aspartic acid residues. In terms of processing, initially, virus-like particles (VLPs) are composed of the structural unprocessed proteins Gag and Gag-Pol, and also contain the host initiator methionine tRNA (tRNA(i)-Met) which serves as a primer for minus-strand DNA synthesis, and a dimer of genomic Ty RNA. Processing of the polyproteins occurs within the particle and proceeds by an ordered pathway, called maturation. First, the protease (PR) is released by autocatalytic cleavage of the Gag-Pol polyprotein yielding capsid protein p45 and a Pol-p154 precursor protein. This cleavage is a prerequisite for subsequent processing of Pol-p154 at the remaining sites to release the mature structural and catalytic proteins. Maturation takes place prior to the RT reaction and is required to produce transposition-competent VLPs.

It is found in the cytoplasm. The protein resides in the nucleus. It catalyses the reaction DNA(n) + a 2'-deoxyribonucleoside 5'-triphosphate = DNA(n+1) + diphosphate. The catalysed reaction is Endonucleolytic cleavage to 5'-phosphomonoester.. In terms of biological role, capsid protein (CA) is the structural component of the virus-like particle (VLP), forming the shell that encapsulates the retrotransposons dimeric RNA genome. The particles are assembled from trimer-clustered units and there are holes in the capsid shells that allow for the diffusion of macromolecules. CA also has nucleocapsid-like chaperone activity, promoting primer tRNA(i)-Met annealing to the multipartite primer-binding site (PBS), dimerization of Ty1 RNA and initiation of reverse transcription. Its function is as follows. The aspartyl protease (PR) mediates the proteolytic cleavages of the Gag and Gag-Pol polyproteins after assembly of the VLP. Reverse transcriptase/ribonuclease H (RT) is a multifunctional enzyme that catalyzes the conversion of the retro-elements RNA genome into dsDNA within the VLP. The enzyme displays a DNA polymerase activity that can copy either DNA or RNA templates, and a ribonuclease H (RNase H) activity that cleaves the RNA strand of RNA-DNA heteroduplexes during plus-strand synthesis and hydrolyzes RNA primers. The conversion leads to a linear dsDNA copy of the retrotransposon that includes long terminal repeats (LTRs) at both ends. Functionally, integrase (IN) targets the VLP to the nucleus, where a subparticle preintegration complex (PIC) containing at least integrase and the newly synthesized dsDNA copy of the retrotransposon must transit the nuclear membrane. Once in the nucleus, integrase performs the integration of the dsDNA into the host genome. The sequence is that of Transposon Ty1-OR Gag-Pol polyprotein (TY1B-OR) from Saccharomyces cerevisiae (strain ATCC 204508 / S288c) (Baker's yeast).